A 429-amino-acid chain; its full sequence is Phosphomethylpyrimidine synthase (429 aa).

Residues Asn-66, Met-95, Tyr-124, His-163, 185–187 (SRG), 226–229 (DAMR), and Glu-265 each bind substrate. His-269 provides a ligand contact to Zn(2+). Tyr-292 provides a ligand contact to substrate. His-333 lines the Zn(2+) pocket. Residues Cys-409, Cys-412, and Cys-416 each coordinate [4Fe-4S] cluster.

This sequence belongs to the ThiC family. Requires [4Fe-4S] cluster as cofactor.

It carries out the reaction 5-amino-1-(5-phospho-beta-D-ribosyl)imidazole + S-adenosyl-L-methionine = 4-amino-2-methyl-5-(phosphooxymethyl)pyrimidine + CO + 5'-deoxyadenosine + formate + L-methionine + 3 H(+). It functions in the pathway cofactor biosynthesis; thiamine diphosphate biosynthesis. Its function is as follows. Catalyzes the synthesis of the hydroxymethylpyrimidine phosphate (HMP-P) moiety of thiamine from aminoimidazole ribotide (AIR) in a radical S-adenosyl-L-methionine (SAM)-dependent reaction. The chain is Phosphomethylpyrimidine synthase from Methanopyrus kandleri (strain AV19 / DSM 6324 / JCM 9639 / NBRC 100938).